The primary structure comprises 274 residues: Putative bidirectional sugar transporter SWEET7d (274 aa).

Over 1 to 8 (MVPDLIRN) the chain is Extracellular. The helical transmembrane segment at 9–29 (VVGIVGNVISFGLFLSPVPTF) threads the bilayer. In terms of domain architecture, MtN3/slv 1 spans 9-96 (VVGIVGNVIS…TIFFLFSDKK (88 aa)). Over 30–45 (WRIIKNKDVRDFKADQ) the chain is Cytoplasmic. Residues 46-66 (YLATLLNCMLWVFYGLPIVHP) traverse the membrane as a helical segment. The Extracellular portion of the chain corresponds to 67–68 (NS). A helical membrane pass occupies residues 69–89 (ILVVTINGIGLVIEAVYLTIF). The Cytoplasmic portion of the chain corresponds to 90-100 (FLFSDKKNKKK). The chain crosses the membrane as a helical span at residues 101–121 (MGVVLATEALFMAAVALGVLL). Residues 122–130 (DAHTHQRRS) lie on the Extracellular side of the membrane. A helical transmembrane segment spans residues 131 to 151 (LIVGILCVIFGTIMYSSPLTI). The MtN3/slv 2 domain maps to 132 to 214 (IVGILCVIFG…QLILYAIYYR (83 aa)). The Cytoplasmic portion of the chain corresponds to 152-164 (MSQVVKTKSVEYM). Residues 165 to 185 (PLLLSVVSFLNGLCWTSYALI) traverse the membrane as a helical segment. The Extracellular segment spans residues 186–188 (RFD). A helical transmembrane segment spans residues 189 to 209 (IFITIPNGLGVLFALMQLILY). Over 210-274 (AIYYRTTPKK…SISRLSHKLA (65 aa)) the chain is Cytoplasmic. Residues 218–274 (KKPSTTGPHPRSRIRTSSYQPSPPSPRAPASSPLSARTTTSMAAMSPSISRLSHKLA) are disordered. A compositionally biased stretch (low complexity) spans 245–258 (APASSPLSARTTTS).

The protein belongs to the SWEET sugar transporter family. In terms of assembly, forms homooligomers and/or heterooligomers.

The protein localises to the cell membrane. In terms of biological role, mediates both low-affinity uptake and efflux of sugar across the plasma membrane. This chain is Putative bidirectional sugar transporter SWEET7d (SWEET7D), found in Oryza sativa subsp. japonica (Rice).